We begin with the raw amino-acid sequence, 289 residues long: Polyketide biosynthesis malonyl CoA-acyl carrier protein transacylase BaeC (289 aa).

Residues serine 87 and histidine 193 contribute to the active site.

This sequence belongs to the FabD family.

It is found in the cytoplasm. It catalyses the reaction holo-[ACP] + malonyl-CoA = malonyl-[ACP] + CoA. The protein operates within antibiotic biosynthesis; bacillaene biosynthesis. In terms of biological role, involved in some intermediate steps for the synthesis of the antibiotic polyketide bacillaene which is involved in secondary metabolism. It catalyzes the transfer of the malonyl-CoA group to the acyl-carrier-protein AcpK (Mal-AcpK). In Bacillus velezensis (strain DSM 23117 / BGSC 10A6 / LMG 26770 / FZB42) (Bacillus amyloliquefaciens subsp. plantarum), this protein is Polyketide biosynthesis malonyl CoA-acyl carrier protein transacylase BaeC (baeC).